Here is a 797-residue protein sequence, read N- to C-terminus: G-type lectin S-receptor-like serine/threonine-protein kinase SD2-2 (797 aa).

The first 23 residues, 1–23 (MPCTTYLPLLLLLFLLPPPSVQS), serve as a signal peptide directing secretion. Residues 24 to 139 (KVIIKGNQTI…DGSPVWQSFD (116 aa)) enclose the Bulb-type lectin domain. At 24 to 401 (KVIIKGNQTI…KNSKGNISKS (378 aa)) the chain is on the extracellular side. 4 N-linked (GlcNAc...) asparagine glycosylation sites follow: Asn-30, Asn-49, Asn-150, and Asn-197. Positions 274–310 (PEDPCRVYNLCGQLGFCSSELLKPCACIRGFRPRNDA) constitute an EGF-like; atypical domain. 4 disulfide bridges follow: Cys-278–Cys-290, Cys-284–Cys-298, Cys-359–Cys-381, and Cys-363–Cys-369. Residues 321–407 (CRRENGDSGE…ISKSIIILCS (87 aa)) enclose the PAN domain. N-linked (GlcNAc...) asparagine glycosylation is found at Asn-366 and Asn-397. The chain crosses the membrane as a helical span at residues 402 to 422 (IIILCSVVGSISVLGFTLLVP). Over 423-797 (LILLKRSRKR…SRSSFGRPSP (375 aa)) the chain is Cytoplasmic. The region spanning 461–742 (NGFSDKVGHG…TVVKMLEGVV (282 aa)) is the Protein kinase domain. Residues 467 to 475 (VGHGGFGAV) and Lys-490 each bind ATP. A caM-binding region spans residues 550-566 (SPKLLSWETRFRIALGT). Asp-585 functions as the Proton acceptor in the catalytic mechanism. Residues 767-797 (GTSCSEGHGCSDLNTGLSSPGSRSSFGRPSP) are disordered. Residues 784-797 (SSPGSRSSFGRPSP) show a composition bias toward low complexity.

The protein belongs to the protein kinase superfamily. Ser/Thr protein kinase family. Autophosphorylated. Expressed in the shoot apex and roots, specifically in lateral roots and at the root-hypocotyl transition zone.

The protein resides in the cell membrane. The catalysed reaction is L-seryl-[protein] + ATP = O-phospho-L-seryl-[protein] + ADP + H(+). It carries out the reaction L-threonyl-[protein] + ATP = O-phospho-L-threonyl-[protein] + ADP + H(+). Its function is as follows. Serine/threonine-protein kinase. This is G-type lectin S-receptor-like serine/threonine-protein kinase SD2-2 (SD22) from Arabidopsis thaliana (Mouse-ear cress).